Here is an 899-residue protein sequence, read N- to C-terminus: Solute carrier family 12 member 9 (899 aa).

Topologically, residues 1–44 (MTSESSPLLHYRLFSVSDGGLGPPDSSPIMTDAVTVGTGPTQRK) are cytoplasmic. Residues 45 to 65 (LSTFFGVVVPTVLSMFSIVVF) traverse the membrane as a helical segment. Residues 66-80 (MRIGFVVGHAGLLQS) lie on the Extracellular side of the membrane. The helical transmembrane segment at 81-101 (LLMLFVAYVIIWLTVLSVCAI) threads the bilayer. Over 102 to 127 (STNGAVQGGGAYFMISRTLGPEFGGS) the chain is Cytoplasmic. Residues 128–148 (IGLMFYLANVFACGVYVLGLV) traverse the membrane as a helical segment. Topologically, residues 149 to 176 (EAVLDVFGRDPSDVTDSLRSLPQGYGYS) are extracellular. Residues 177–197 (FLYASIILLLCMAICLVGASI) form a helical membrane-spanning segment. At 198–202 (YSQAS) the chain is on the cytoplasmic side. The helical transmembrane segment at 203–223 (FFIFLLVFVVLLTILISFLAV) threads the bilayer. At 224-266 (RPLTVSIRHGGNVTMTGVYTGINSSTLHNNLQADYSLDYTTGN) the chain is on the extracellular side. N-linked (GlcNAc...) asparagine glycans are attached at residues Asn235 and Asn246. The helical transmembrane segment at 267-287 (LMNFATVFAVMFNGCTGIMAG) threads the bilayer. The Cytoplasmic segment spans residues 288-304 (CNLSGELKQPSRSIPMG). A helical membrane pass occupies residues 305-325 (TIIAVIITFFVYLILFIFTAF). Residues 326–347 (TCDRTLLREDYGFFRSINIWPP) lie on the Extracellular side of the membrane. The chain crosses the membrane as a helical span at residues 348–368 (FVLIGVYATSLSASMSTLIGA). Topologically, residues 369–393 (SRILHALAKDDLFGVLLAPAKLVSK) are cytoplasmic. Residues 394–414 (GGNPWGAVVYTWALVQLVLLA) form a helical membrane-spanning segment. At 415 to 419 (GKLNT) the chain is on the extracellular side. A helical membrane pass occupies residues 420–440 (IAGIVTVFYLIAYAAIDLACL). The Cytoplasmic portion of the chain corresponds to 441-469 (ALEWASAPNFRPTFRFFSWHTCLLGILSS). A helical transmembrane segment spans residues 470–490 (LVMMFLINPAYASGSIVLLLL). The Extracellular portion of the chain corresponds to 491 to 739 (LLGSIHFRSS…PLDLLRPQAS (249 aa)). Residues 740 to 760 (AYVDVCSLFLLQMACILNMAA) form a helical membrane-spanning segment. Over 761–899 (SWRRYQLRVF…GLTPVTCTEL (139 aa)) the chain is Cytoplasmic.

The protein belongs to the SLC12A transporter family.

It localises to the cell membrane. Its subcellular location is the lysosome membrane. Functionally, seems to correspond to a subunit of a multimeric transport system and thus, additional subunits may be required for its function. May play a role in lysosomal ion flux and osmoregulation. This Xenopus laevis (African clawed frog) protein is Solute carrier family 12 member 9 (slc12a9).